The sequence spans 274 residues: Large ribosomal subunit protein uL2 (274 aa).

The tract at residues 223–274 (VAMNPVDHPMGGGEGKASGGHPRSRTGLYAKGKKTRNTNKYSKNYILSRKKR) is disordered.

This sequence belongs to the universal ribosomal protein uL2 family. Part of the 50S ribosomal subunit. Forms a bridge to the 30S subunit in the 70S ribosome.

Its function is as follows. One of the primary rRNA binding proteins. Required for association of the 30S and 50S subunits to form the 70S ribosome, for tRNA binding and peptide bond formation. It has been suggested to have peptidyltransferase activity; this is somewhat controversial. Makes several contacts with the 16S rRNA in the 70S ribosome. The polypeptide is Large ribosomal subunit protein uL2 (Amoebophilus asiaticus (strain 5a2)).